Consider the following 414-residue polypeptide: Glutamyl-tRNA reductase (414 aa).

Residues 49–52, Ser108, 113–115, and Gln119 each bind substrate; these read TCNR and EPQ. The Nucleophile role is filled by Cys50. 188–193 is an NADP(+) binding site; the sequence is GAGQTG.

It belongs to the glutamyl-tRNA reductase family. In terms of assembly, homodimer.

The enzyme catalyses (S)-4-amino-5-oxopentanoate + tRNA(Glu) + NADP(+) = L-glutamyl-tRNA(Glu) + NADPH + H(+). It participates in porphyrin-containing compound metabolism; protoporphyrin-IX biosynthesis; 5-aminolevulinate from L-glutamyl-tRNA(Glu): step 1/2. Catalyzes the NADPH-dependent reduction of glutamyl-tRNA(Glu) to glutamate 1-semialdehyde (GSA). This chain is Glutamyl-tRNA reductase, found in Francisella tularensis subsp. holarctica (strain FTNF002-00 / FTA).